Here is a 456-residue protein sequence, read N- to C-terminus: Ribosomal RNA small subunit methyltransferase F (456 aa).

Residues 109-115 (AAAPGGK), Glu-133, Arg-138, and Asp-177 each bind S-adenosyl-L-methionine. Residue Cys-230 is the Nucleophile of the active site.

Belongs to the class I-like SAM-binding methyltransferase superfamily. RsmB/NOP family.

It localises to the cytoplasm. The catalysed reaction is cytidine(1400) in 16S rRNA + S-adenosyl-L-methionine = 5-methylcytidine(1400) in 16S rRNA + S-adenosyl-L-homocysteine + H(+). It carries out the reaction cytidine(1404) in 16S rRNA + S-adenosyl-L-methionine = 5-methylcytidine(1404) in 16S rRNA + S-adenosyl-L-homocysteine + H(+). The enzyme catalyses cytidine(1407) in 16S rRNA + S-adenosyl-L-methionine = 5-methylcytidine(1407) in 16S rRNA + S-adenosyl-L-homocysteine + H(+). Its function is as follows. Specifically methylates the cytosines at positions 1400 (m5C1400), 1404 (m5C1404) and 1407 (m5C1407) of 16S rRNA. C1400, C1404 and C1407 are methylated in a 30S subunit substrate, but only C1400 and C1404 are methylated when naked 16S rRNA is the substrate. Methylation by RsmF may facilitate growth at temperatures outside the optimal growth temperature. The chain is Ribosomal RNA small subunit methyltransferase F from Thermus thermophilus (strain ATCC 27634 / DSM 579 / HB8).